Here is a 385-residue protein sequence, read N- to C-terminus: Lipid-A-disaccharide synthase (385 aa).

This sequence belongs to the LpxB family.

It catalyses the reaction a lipid X + a UDP-2-N,3-O-bis[(3R)-3-hydroxyacyl]-alpha-D-glucosamine = a lipid A disaccharide + UDP + H(+). It functions in the pathway bacterial outer membrane biogenesis; LPS lipid A biosynthesis. Functionally, condensation of UDP-2,3-diacylglucosamine and 2,3-diacylglucosamine-1-phosphate to form lipid A disaccharide, a precursor of lipid A, a phosphorylated glycolipid that anchors the lipopolysaccharide to the outer membrane of the cell. This chain is Lipid-A-disaccharide synthase, found in Pseudoalteromonas translucida (strain TAC 125).